Consider the following 215-residue polypeptide: Small ribosomal subunit protein uS7 (215 aa).

Belongs to the universal ribosomal protein uS7 family. Part of the 30S ribosomal subunit.

In terms of biological role, one of the primary rRNA binding proteins, it binds directly to 16S rRNA where it nucleates assembly of the head domain of the 30S subunit. Is located at the subunit interface close to the decoding center. In Pyrococcus furiosus (strain ATCC 43587 / DSM 3638 / JCM 8422 / Vc1), this protein is Small ribosomal subunit protein uS7.